A 244-amino-acid polypeptide reads, in one-letter code: Cytochrome c1 (244 aa).

An N-terminal signal peptide occupies residues 1–19; it reads MRKLILATFLLLAPTALLA. 3 residues coordinate heme c: cysteine 50, cysteine 53, and histidine 54. A helical membrane pass occupies residues 220–240; the sequence is YVLLFLGFLFILAYLLKKEYW.

In terms of assembly, the main subunits of complex b-c1 are: cytochrome b, cytochrome c1 and the Rieske protein. Post-translationally, binds 1 heme c group covalently per subunit.

The protein resides in the cell membrane. In terms of biological role, component of the ubiquinol-cytochrome c reductase complex (complex III or cytochrome b-c1 complex), which is a respiratory chain that generates an electrochemical potential coupled to ATP synthesis. c1 functions as an electron donor to cytochrome c. The protein is Cytochrome c1 (petC) of Allochromatium vinosum (strain ATCC 17899 / DSM 180 / NBRC 103801 / NCIMB 10441 / D) (Chromatium vinosum).